Here is a 504-residue protein sequence, read N- to C-terminus: Doublesex- and mab-3-related transcription factor A1 (504 aa).

A compositionally biased stretch (basic and acidic residues) spans Met1 to Val13. A disordered region spans residues Met1–Ala27. Positions Cys97–Arg144 form a DNA-binding region, DM. Disordered stretches follow at residues Gly170 to Ala192 and Ser266 to Glu307. Positions Arg293–Ser306 are enriched in low complexity. Positions Arg327–Gln362 constitute a DMA domain.

It belongs to the DMRT family. As to expression, expressed in liver, kidney, pancreas, prostate and weakly detected in testis and ovary.

Its subcellular location is the nucleus. The chain is Doublesex- and mab-3-related transcription factor A1 (DMRTA1) from Homo sapiens (Human).